A 131-amino-acid polypeptide reads, in one-letter code: Aspartate 1-decarboxylase (131 aa).

The Schiff-base intermediate with substrate; via pyruvic acid role is filled by S25. S25 bears the Pyruvic acid (Ser) mark. Residue T57 coordinates substrate. The Proton donor role is filled by Y58. G73–A75 is a binding site for substrate.

It belongs to the PanD family. Heterooctamer of four alpha and four beta subunits. Pyruvate serves as cofactor. In terms of processing, is synthesized initially as an inactive proenzyme, which is activated by self-cleavage at a specific serine bond to produce a beta-subunit with a hydroxyl group at its C-terminus and an alpha-subunit with a pyruvoyl group at its N-terminus.

It is found in the cytoplasm. It catalyses the reaction L-aspartate + H(+) = beta-alanine + CO2. Its pathway is cofactor biosynthesis; (R)-pantothenate biosynthesis; beta-alanine from L-aspartate: step 1/1. In terms of biological role, catalyzes the pyruvoyl-dependent decarboxylation of aspartate to produce beta-alanine. This chain is Aspartate 1-decarboxylase, found in Chlorobium phaeobacteroides (strain DSM 266 / SMG 266 / 2430).